The following is a 322-amino-acid chain: Cyanophycinase (322 aa).

Active-site charge relay system residues include S178, E196, and H220.

The protein belongs to the peptidase S51 family.

The catalysed reaction is [L-4-(L-arginin-2-N-yl)aspartate](n) + H2O = [L-4-(L-arginin-2-N-yl)aspartate](n-1) + L-4-(L-arginin-2-N-yl)aspartate. Functionally, exopeptidase that catalyzes the hydrolytic cleavage of multi-L-arginyl-poly-L-aspartic acid (cyanophycin; a water-insoluble reserve polymer) into aspartate-arginine dipeptides. The chain is Cyanophycinase (cphB) from Synechococcus elongatus.